A 691-amino-acid chain; its full sequence is Homeobox protein NOBOX (691 aa).

A compositionally biased stretch (basic and acidic residues) spans 94 to 103; it reads ELTRGQKAGE. The tract at residues 94–233 is disordered; sequence ELTRGQKAGE…NSARATHNPV (140 aa). Residues 216 to 228 are compositionally biased toward polar residues; the sequence is PTSSPGAPNSARA. A DNA-binding region (homeobox) is located at residues 272–363; that stretch reads RKKTRTLYRS…NRRAKWRKME (92 aa). 3 disordered regions span residues 366–385, 394–437, and 635–691; these read NGKE…SQCS, VPME…AQRV, and QALG…SHVP. Residues 395–405 are compositionally biased toward pro residues; it reads PMEPKPDPFPQ. Positions 420 to 432 are enriched in polar residues; sequence TSDQTLAPTQPSE. The span at 679-691 shows a compositional bias: basic and acidic residues; that stretch reads EEARGDDKNSHVP.

In terms of tissue distribution, expressed in ovaries, testes and pancreas. Expressed within all stages of the adult female germline, from primordial follicles through to MII oocytes.

It is found in the nucleus. In terms of biological role, transcription factor which may play a role in oogenesis. Binds preferentially to the DNA sequences 5'-TAATTG-3', 5'-TAGTTG-3' and 5'-TAATTA-3'. This Homo sapiens (Human) protein is Homeobox protein NOBOX (NOBOX).